The primary structure comprises 1101 residues: Serine/threonine-protein kinase PSK2 (1101 aa).

Phosphothreonine is present on Thr118. Residues 841 to 1099 (FTILQVMGEG…IDEIYEDKWL (259 aa)) form the Protein kinase domain. ATP is bound by residues 847–855 (MGEGAYGKV) and Lys870. Residue Asp975 is the Proton acceptor of the active site.

Belongs to the protein kinase superfamily. Ser/Thr protein kinase family.

It localises to the cytoplasm. The enzyme catalyses L-seryl-[protein] + ATP = O-phospho-L-seryl-[protein] + ADP + H(+). It catalyses the reaction L-threonyl-[protein] + ATP = O-phospho-L-threonyl-[protein] + ADP + H(+). Serine/threonine-protein kinase involved in the control of sugar metabolism and translation. Phosphorylates UGP1, which is required for normal glycogen and beta-(1,6)-glucan synthesis. This phosphorylation shifts glucose partitioning toward cell wall glucan synthesis at the expense of glycogen synthesis. Also phosphorylates the glycogen synthase GSY2 and the translation factors CAF20, TIF11 and SRO9. This chain is Serine/threonine-protein kinase PSK2 (PSK2), found in Saccharomyces cerevisiae (strain ATCC 204508 / S288c) (Baker's yeast).